The following is a 384-amino-acid chain: 5-cytosine rRNA methyltransferase NSUN4 (384 aa).

A mitochondrion-targeting transit peptide spans 1–25 (MAALVVRGVRDMLKRADFATVPRRQ). S-adenosyl-L-methionine-binding residues include Gly-185, Gly-186, Lys-187, and Asp-204. Ser-206 is subject to Phosphoserine. Arg-209, Asp-237, Gly-238, and Asp-255 together coordinate S-adenosyl-L-methionine. The Nucleophile role is filled by Cys-310.

It belongs to the class I-like SAM-binding methyltransferase superfamily. RsmB/NOP family. Heterodimer with MTERFD2/MTERF4; this interaction seems to be required for NSUN4 recruitment to the mitochondrial large ribosomal subunit.

The protein resides in the mitochondrion. The enzyme catalyses a cytidine in rRNA + S-adenosyl-L-methionine = a 5-methylcytidine in rRNA + S-adenosyl-L-homocysteine + H(+). The catalysed reaction is a cytidine in mRNA + S-adenosyl-L-methionine = a 5-methylcytidine in mRNA + S-adenosyl-L-homocysteine + H(+). Functionally, mitochondrial RNA cytosine C(5)-methyltransferase that methylates cytosine to 5-methylcytosine (m5C) in various RNAs, such as rRNAs, mRNAs and some long non-coding RNAs (lncRNAs). Involved in mitochondrial ribosome small subunit (SSU) maturation by catalyzing methylation of mitochondrial 12S rRNA; the function is independent of MTERFD2/MTERF4 and assembled mitochondrial ribosome large subunit (LSU). Targeted to LSU by MTERFD2/MTERF4 and probably is involved in a final step in ribosome biogenesis to ensure that SSU and LSU are assembled. In vitro can methylate 16S rRNA of the LSU; the methylation is enhanced by MTERFD/MTERF4. Also acts as a regulator of innate immunity by marking double-stranded mitochondrial RNAs(mt-dsRNAs) generated in response to stress: catalyzes m5C modification on mitochondrial RNAs, such as a mRNAs and lncRNAs, with a preference for the termini of light-strand lncRNAs, promoting their degradation and cytosolic release. Modified light-strand lncRNAs are then recognized by C1QBP reader and recruited to the mitochondrial degradosome complex, which promotes their degradation. The polypeptide is 5-cytosine rRNA methyltransferase NSUN4 (NSUN4) (Bos taurus (Bovine)).